The chain runs to 101 residues: MSMAEGDTLISVDYEVFGKVQGVFFRKYTQAEGKKLGLVGWVQNTDQGTVQGQLQGPTSKVRHMQEWLETRGSPKSHIDRASFNNEKVISKLDYSDFQIVK.

An N-acetylserine modification is found at Ser-2. At Ser-2 the chain carries N-acetylalanine. Residues 11–101 (SVDYEVFGKV…LDYSDFQIVK (91 aa)) enclose the Acylphosphatase-like domain. Active-site residues include Arg-26 and Asn-44.

The protein belongs to the acylphosphatase family. In terms of tissue distribution, organ-common type isozyme is found in many different tissues.

It catalyses the reaction an acyl phosphate + H2O = a carboxylate + phosphate + H(+). This Sus scrofa (Pig) protein is Acylphosphatase-1 (ACYP1).